The following is a 912-amino-acid chain: MTVKKLENSSDVNVVTEEVKILTNLLNESTEQLIGKELFTKIQNLIKISADKNYQELEDQIASLDNREMIVVARYFATLPLLINISEDVELASKVNVLNNTNQDYLGKLNDTIDIVAQKKNAKEILEKVNVVPVLTAHPTQVQRKTVLELTDKIHKLLRNYREVKNGIITRVEWTEELRACIEILMQTDIIRSHKLKVSNEITNVLTYYPKSLIPAITKFTARYKELAKKHGLDIPDATPITMGMWIGGDRDGNPYVTADTLKLSATLQGQVIFEYYIKQINQLYRSISLSTSYMKPSTEVMHLSELSNDDSPFRTNEPYRRAFYYIESRLVRSEQKLLNITNQHSFLKERDLEHLDQIPAYEDAQEFKADLEVIKRSLEENRDQAVVKSYFTEILEAIDVFGFHLATIDMRQDSSVNEACVAELLKSAEICDHYSELSEKEKVSLLLNELNNDPRNLHTNNKPKSELLQKELKIYKTARDLKDRLGEDLIKQHIISHTESVSDMLEQAIMLKEYDLLDNQSARVQVVPLFETVEDLNNARDIIKEYLNLDIVKKWLVSQHNYQEVMLGYSDSNKDGGYLASCWNLYKAQKDLTAIGEELGIKITYMHGRGGTVGRGGGPSYEAITAQPFNSINDRIRMTEQGEIIQNKYGNKDAAYYNLEMLVSATVDRIASKQIVSEEYIADFRSSMDKIVTESNEIYKKLVFENPNFLDYFLQATPIKEISNLNIGSRPASRKKLSDFSSLRAIPWVFSWSQSRVMFPGWYGVGSAFKHFIDADKKNLQELQHMYQGWPFFHALLSNADMVLSKSNMEIAKQYAELCQDEKTKSVFDIIYQEWKLTKQIILQIEGHDDLLSDAPNLKNSLASRMPYFNILNYIQLEMIKRDREDEIKGVFQSIIPITINGVASGLRNSG.

Residues histidine 138 and lysine 575 contribute to the active site.

This sequence belongs to the PEPCase type 1 family. Requires Mg(2+) as cofactor.

It catalyses the reaction oxaloacetate + phosphate = phosphoenolpyruvate + hydrogencarbonate. Functionally, forms oxaloacetate, a four-carbon dicarboxylic acid source for the tricarboxylic acid cycle. The chain is Phosphoenolpyruvate carboxylase from Lactobacillus helveticus (strain DPC 4571).